The sequence spans 432 residues: 5'-deoxyadenosine deaminase (432 aa).

Zn(2+)-binding residues include histidine 63 and histidine 65. Residues glutamate 92 and histidine 184 each coordinate substrate. Residue histidine 211 participates in Zn(2+) binding. Substrate is bound by residues glutamate 214 and aspartate 299. Residue aspartate 299 coordinates Zn(2+).

Belongs to the metallo-dependent hydrolases superfamily. MTA/SAH deaminase family. As to quaternary structure, homotetramer. Requires Zn(2+) as cofactor.

It catalyses the reaction 5'-deoxyadenosine + H2O + H(+) = 5'-deoxyinosine + NH4(+). The enzyme catalyses S-adenosyl-L-homocysteine + H2O + H(+) = S-inosyl-L-homocysteine + NH4(+). It carries out the reaction S-methyl-5'-thioadenosine + H2O + H(+) = S-methyl-5'-thioinosine + NH4(+). The catalysed reaction is adenosine + H2O + H(+) = inosine + NH4(+). It functions in the pathway amino-acid biosynthesis; S-adenosyl-L-methionine biosynthesis. Its function is as follows. Catalyzes the deamination of three SAM-derived enzymatic products, namely 5'-deoxyadenosine, S-adenosyl-L-homocysteine, and 5'-methylthioadenosine, to produce the inosine analogs. Can also deaminate adenosine. The preferred substrate for this enzyme is 5'-deoxyadenosine, but all these substrates are efficiently deaminated. Likely functions in a S-adenosyl-L-methionine (SAM) recycling pathway from S-adenosyl-L-homocysteine (SAH) produced from SAM-dependent methylation reactions. May also be involved in the recycling of 5'-deoxyadenosine, whereupon the 5'-deoxyribose moiety of 5'-deoxyinosine is further metabolized to deoxyhexoses used for the biosynthesis of aromatic amino acids in methanogens. In Methanosarcina mazei (strain ATCC BAA-159 / DSM 3647 / Goe1 / Go1 / JCM 11833 / OCM 88) (Methanosarcina frisia), this protein is 5'-deoxyadenosine deaminase.